Consider the following 398-residue polypeptide: MTKSLTNMNITNKKVLLRADLNVPLENSVITDDNRIKAILPTLKYLVQQKAKVIIFSHLGRVKTEADKAHFSLQVVAEKIAFYLQQKLKFVPETQGNTLNQAVGQMLPGDVLVVQNTRFEDVPFKKESKNDPELGKYWASLGDVFVNDAFGTCHRTHASNVGIATYIKEKCFGFLVEKEISFLKKIVQTPQRPLVAVLGGSKVSDKIGVIRSLLQKVDVLLIGGGMSYTCLKAKCFNIGTSLLEADKIPLVKELLASPEGKKIVLPKDFVCGKEFSPTTQAAVYSYDNISDDVMGLDIGPQTIELFKTYLQTAQTVVWNGPVGVFEFEQFSKGTKALAETISNLSPNTTTIIGGGDSAAAVFKFGLDQNFSHISTGGGAFLEFLEGKPMPGLACMEKL.

Substrate is bound by residues 20-22 (DLN), R35, 58-61 (HLGR), R118, and R155. ATP-binding positions include K206, G295, E326, and 354–357 (GGDS).

This sequence belongs to the phosphoglycerate kinase family. As to quaternary structure, monomer.

The protein resides in the cytoplasm. The enzyme catalyses (2R)-3-phosphoglycerate + ATP = (2R)-3-phospho-glyceroyl phosphate + ADP. The protein operates within carbohydrate degradation; glycolysis; pyruvate from D-glyceraldehyde 3-phosphate: step 2/5. This chain is Phosphoglycerate kinase, found in Onion yellows phytoplasma (strain OY-M).